A 423-amino-acid chain; its full sequence is COP9 signalosome complex subunit 3 (423 aa).

An N-acetylalanine modification is found at A2. Positions 197 to 365 (NFERALYFYE…GMVSFHDNPE (169 aa)) constitute a PCI domain. The interval 402 to 423 (QFVQKSMGSQEDDSGNKPSSYS) is disordered. A phosphoserine mark is found at S407, S410, and S423.

Belongs to the CSN3 family. In terms of assembly, component of the CSN complex, composed of COPS1/GPS1, COPS2, COPS3, COPS4, COPS5, COPS6, COPS7 (COPS7A or COPS7B), COPS8 and COPS9. In the complex, it probably interacts directly with COPS1, COPS4, COPS8 and COPS9. Interacts with CK2 and PKD. Interacts with the translation initiation factor EIF3S6 and IKBKG. Interacts with ERCC6. As to expression, widely expressed.

It is found in the cytoplasm. It localises to the nucleus. Functionally, component of the COP9 signalosome complex (CSN), a complex involved in various cellular and developmental processes. The CSN complex is an essential regulator of the ubiquitin (Ubl) conjugation pathway by mediating the deneddylation of the cullin subunits of SCF-type E3 ligase complexes, leading to decrease the Ubl ligase activity of SCF-type complexes such as SCF, CSA or DDB2. The complex is also involved in phosphorylation of p53/TP53, c-jun/JUN, IkappaBalpha/NFKBIA, ITPK1 and IRF8/ICSBP, possibly via its association with CK2 and PKD kinases. CSN-dependent phosphorylation of TP53 and JUN promotes and protects degradation by the Ubl system, respectively. Essential to maintain the survival of epiblast cells and thus the development of the postimplantation embryo. The chain is COP9 signalosome complex subunit 3 (Cops3) from Mus musculus (Mouse).